A 193-amino-acid polypeptide reads, in one-letter code: Phosphoheptose isomerase (193 aa).

Residues 37 to 193 (LANAFKAGGK…QLIEKEMADQ (157 aa)) form the SIS domain. 52–54 (NGG) contacts substrate. The Zn(2+) site is built by His61 and Glu65. Residues Glu65, 93-94 (ND), 119-121 (STS), Ser124, and Gln172 each bind substrate. Zn(2+)-binding residues include Gln172 and His180.

Belongs to the SIS family. GmhA subfamily. In terms of assembly, homotetramer. Requires Zn(2+) as cofactor.

It localises to the cytoplasm. It catalyses the reaction 2 D-sedoheptulose 7-phosphate = D-glycero-alpha-D-manno-heptose 7-phosphate + D-glycero-beta-D-manno-heptose 7-phosphate. The protein operates within carbohydrate biosynthesis; D-glycero-D-manno-heptose 7-phosphate biosynthesis; D-glycero-alpha-D-manno-heptose 7-phosphate and D-glycero-beta-D-manno-heptose 7-phosphate from sedoheptulose 7-phosphate: step 1/1. In terms of biological role, catalyzes the isomerization of sedoheptulose 7-phosphate in D-glycero-D-manno-heptose 7-phosphate. This Pectobacterium atrosepticum (strain SCRI 1043 / ATCC BAA-672) (Erwinia carotovora subsp. atroseptica) protein is Phosphoheptose isomerase.